Consider the following 135-residue polypeptide: UPF0355 protein SAV0387 (135 aa).

This sequence belongs to the UPF0355 family.

This chain is UPF0355 protein SAV0387, found in Staphylococcus aureus (strain Mu50 / ATCC 700699).